A 252-amino-acid polypeptide reads, in one-letter code: Putative cytosolic acyl coenzyme A thioester hydrolase-like (252 aa).

2 HotDog ACOT-type domains span residues 1 to 90 (MIKE…LSLT) and 146 to 252 (SYSQ…SVFT).

Homodimer. Expressed in all tissues examined. Up-regulated in nasopharyngeal carcinoma (at protein level).

The protein localises to the cytoplasm. The catalysed reaction is hexadecanoyl-CoA + H2O = hexadecanoate + CoA + H(+). Functionally, acyl-CoA thioesterases are a group of enzymes that catalyze the hydrolysis of acyl-CoAs to the free fatty acid and coenzyme A (CoASH), providing the potential to regulate intracellular levels of acyl-CoAs, free fatty acids and CoASH. In Homo sapiens (Human), this protein is Putative cytosolic acyl coenzyme A thioester hydrolase-like (ACOT7L).